The following is a 400-amino-acid chain: tRNA-specific 2-thiouridylase MnmA (400 aa).

Residues 19–26 and Leu45 contribute to the ATP site; that span reads AMSGGVDS. Catalysis depends on Cys113, which acts as the Nucleophile. The cysteines at positions 113 and 210 are disulfide-linked. Gly137 contributes to the ATP binding site. The tract at residues 160 to 162 is interaction with tRNA; it reads RDQ. The active-site Cysteine persulfide intermediate is the Cys210.

The protein belongs to the MnmA/TRMU family.

It localises to the cytoplasm. The catalysed reaction is S-sulfanyl-L-cysteinyl-[protein] + uridine(34) in tRNA + AH2 + ATP = 2-thiouridine(34) in tRNA + L-cysteinyl-[protein] + A + AMP + diphosphate + H(+). In terms of biological role, catalyzes the 2-thiolation of uridine at the wobble position (U34) of tRNA, leading to the formation of s(2)U34. In Rhodopseudomonas palustris (strain BisB18), this protein is tRNA-specific 2-thiouridylase MnmA.